The following is a 396-amino-acid chain: MTINPVSRKVAWLRVVTLAIAAFIFNTTEFVPVGLLSDIAESFHMQTAQVGIMLTIYAWVVAVMSLPFMLLTSQIERRKLLICLFVLFIASHVLSFLAWNFTVLVISRIGIAFTHAIFWSITASLAIRLAPAGKRAQALSLIATGTALAMVLGLPIGRVVGQYFGWRTTFFAIGMGALITLICLIKLLPKLPSEHSGSLKSLPLLFRRPALMSLYLLTAVVVTAHYTAYSYIEPFVQNVAGLSANFATVLLLILGGAGIIGSLVFGKLGNQHASLLVSIAISLLVVCLLLLLPAADSEAHLALLSIFWGIAIMVIGLGMQVKVLALAPDATDVAMALFSGIFNIGIGAGALAGNQVSLHWSMSTIGYIGAVPACAALVWAVLIFRKWPVTLEEQPR.

Helical transmembrane passes span 15-35 (VVTL…PVGL), 50-70 (VGIM…PFML), 81-101 (LICL…AWNF), 103-123 (VLVI…SITA), 136-156 (AQAL…GLPI), 169-189 (TFFA…KLLP), 209-229 (PALM…YTAY), 246-266 (FATV…LVFG), 275-295 (LLVS…LPAA), 301-321 (LALL…GMQV), 333-353 (VAMA…ALAG), and 364-384 (TIGY…VLIF).

The protein belongs to the major facilitator superfamily. SotB (TC 2.A.1.2) family.

Its subcellular location is the cell inner membrane. In terms of biological role, involved in the efflux of sugars. The physiological role may be the reduction of the intracellular concentration of toxic sugars or sugar metabolites. The polypeptide is Probable sugar efflux transporter (Salmonella arizonae (strain ATCC BAA-731 / CDC346-86 / RSK2980)).